The chain runs to 391 residues: Multidrug resistance protein MdtL (391 aa).

12 consecutive transmembrane segments (helical) span residues 4–24 (FLIC…MYLV), 42–62 (IAFS…GKVA), 69–89 (PVAI…SLAE), 93–113 (LFLA…VVAF), 131–151 (LLNG…HLIM), 158–178 (SLFW…LFIL), 203–222 (FFLS…LTFV), 245–265 (ALTA…LGIF), 269–289 (TLMI…AVSP), 293–313 (VSLF…GVAM), 331–351 (LGIA…VVGI), and 356–376 (MLIG…MFVA).

The protein belongs to the major facilitator superfamily. DHA1 family. MdtL (TC 2.A.1.2.22) subfamily.

Its subcellular location is the cell inner membrane. Its function is as follows. Confers resistance to chloramphenicol. In Escherichia coli O45:K1 (strain S88 / ExPEC), this protein is Multidrug resistance protein MdtL.